The chain runs to 582 residues: Semenogelin-2 (582 aa).

The signal sequence occupies residues 1 to 23 (MKSIILFVLSLLLILEKQAAVMG). Disordered regions lie at residues 25–65 (KGGS…SSSI), 91–157 (HKTT…GISS), 171–192 (LSKE…GSQS), 272–366 (NLNQ…KDIQ), and 393–557 (SNQD…HNTV). Over residues 50-59 (GQKDKQHTES) the composition is skewed to basic and acidic residues. Positions 111 to 134 (QKGRDHVKPKRHFRLIVIHRKGGQ) are enriched in basic residues. 2 stretches are compositionally biased toward polar residues: residues 137–157 (HGTQ…GISS) and 174–192 (EQAS…GSQS). Basic and acidic residues predominate over residues 293 to 310 (TEERQFNHGEKSVQKDVP). A compositionally biased stretch (polar residues) spans 325-335 (KSQNQVSIPSQ). 4 stretches are compositionally biased toward basic and acidic residues: residues 336 to 345 (DQEHGHKENK), 353 to 366 (TEER…KDIQ), 396 to 405 (DQEHGHKENK), and 413 to 426 (TEER…KDIQ). Polar residues-rich tracts occupy residues 427–437 (KSVSKGSISIQ) and 445–455 (KSQNQVTIPSQ). Positions 456–465 (DQEHGHKENK) are enriched in basic and acidic residues. 2 stretches are compositionally biased toward polar residues: residues 487-498 (KDVSQSSLSFQT) and 506-529 (SQIQ…NSGK). Residues 530–546 (SADREQDLLSHEQESRY) are compositionally biased toward basic and acidic residues. Polar residues predominate over residues 547 to 557 (QQKSSGAHNTV).

Belongs to the semenogelin family. As to quaternary structure, interacts with SERPINA5.

It is found in the secreted. Its function is as follows. Participates in the formation of a gel matrix (sperm coagulum) entrapping the accessory gland secretions and ejaculated spermatozoa. The polypeptide is Semenogelin-2 (SEMG2) (Colobus guereza (Mantled guereza)).